A 297-amino-acid polypeptide reads, in one-letter code: CCAAT/enhancer-binding protein beta (297 aa).

Positions 1 to 22 are required for Lys-134 sumoylation; the sequence is MHRLLAWDAACLPPPPAAFRPM. An Asymmetric dimethylarginine; by CARM1 modification is found at Arg-3. The interval 22–105 is required for MYC transcriptional repression; it reads MEVANFYYEP…YGAKPSKKPS (84 aa). Lys-39 is subject to N6-acetyllysine; alternate. An N6-methylated lysine; alternate modification is found at Lys-39. Lys-99 and Lys-102 each carry N6-acetyllysine; by KAT2A and KAT2B. N6-acetyllysine; by KAT2A and KAT2B; alternate is present on Lys-103. Lys-103 is covalently cross-linked (Glycyl lysine isopeptide (Lys-Gly) (interchain with G-Cter in SUMO2); alternate). Residue Ser-105 is modified to Phosphoserine; by RPS6KA1 and PKC/PRKCA. Residue Lys-134 forms a Glycyl lysine isopeptide (Lys-Gly) (interchain with G-Cter in SUMO2); alternate linkage. Lys-134 participates in a covalent cross-link: Glycyl lysine isopeptide (Lys-Gly) (interchain with G-Cter in SUMO); alternate. Lys-145 is covalently cross-linked (Glycyl lysine isopeptide (Lys-Gly) (interchain with G-Cter in SUMO2)). The tract at residues 172–201 is disordered; the sequence is SGSSGSLSTSSSSSPPGTPSPADAKAAPAA. Phosphothreonine; by GSK3-beta is present on Thr-180. 2 O-linked (GlcNAc) serine glycosylation sites follow: Ser-181 and Ser-182. A Phosphoserine; by GSK3-beta modification is found at Ser-185. A Phosphothreonine; by RPS6KA1, CDK2 and MAPK modification is found at Thr-189. Glycyl lysine isopeptide (Lys-Gly) (interchain with G-Cter in SUMO2) cross-links involve residues Lys-212 and Lys-214. The bZIP domain maps to 223-286; it reads SDEYKMRRER…STLRNLFKQL (64 aa). A basic motif region spans residues 227–247; that stretch reads KMRRERNNIAVRKSRDKAKMR. Ser-240 carries the post-translational modification Phosphoserine; by PKC/PRKCA. Positions 249–256 are leucine-zipper; sequence LETQHKVL. Ser-277 is modified (phosphoserine; by CaMK2). Lys-284 is covalently cross-linked (Glycyl lysine isopeptide (Lys-Gly) (interchain with G-Cter in SUMO2)).

It belongs to the bZIP family. C/EBP subfamily. In terms of assembly, binds DNA as a homodimer and as a heterodimer. Interacts with MYB; within the complex, MYB and CEBPB bind to different promoter regions. Interacts with ATF4. Binds DNA as a heterodimer with ATF4. Can form stable heterodimers with CEBPA, CEBPD, CEBPE and CEBPG. Interacts with SIX1. Isoform 2 and isoform 3 also form heterodimers. Interacts with TRIM28 and PTGES2. Interacts with PRDM16. Interacts with CCDC85B. Forms a complex with THOC5. Interacts with ZNF638; this interaction increases transcriptional activation. Interacts with CIDEA and CIDEC; these interactions increase transcriptional activation of a subset of CEBPB downstream target genes. Interacts with DDIT3/CHOP. Interacts with EP300; recruits EP300 to chromatin. Interacts with RORA; the interaction disrupts interaction with EP300. Interacts (not methylated) with MED23, MED26, SMARCA2, SMARCB1 and SMARCC1. Interacts with KAT2A and KAT2B. Interacts with ATF5; EP300 is required for ATF5 and CEBPB interaction and DNA binding. Interacts with NFE2L1; the heterodimer represses expression of DSPP during odontoblast differentiation. Phosphorylated at Thr-189 by MAPK and CDK2, serves to prime phosphorylation at Thr-180 and Ser-185 by GSK3B and acquire DNA-binding as well as transactivation activities, required to induce adipogenesis. MAPK and CDK2 act sequentially to maintain Thr-189 in the primed phosphorylated state during mitotical cloning expansion and thereby progression of terminal differentiation. Phosphorylation at Ser-105 enhances transactivation activity. Phosphorylation at Ser-277 in response to calcium increases transactivation activity. Phosphorylated at Thr-189 by RPS6KA1. Post-translationally, methylated. Methylation at Arg-3 by CARM1 and at Lys-39 by EHMT2 inhibit transactivation activity. Methylation is probably inhibited by phosphorylation at Thr-189. In terms of processing, sumoylated by polymeric chains of SUMO2 or SUMO3. Sumoylation at Lys-134 is required for inhibition of T-cells proliferation. In adipocytes, sumoylation at Lys-134 by PIAS1 leads to ubiquitination and subsequent proteasomal degradation. Desumoylated by SENP2, which abolishes ubiquitination and stabilizes protein levels. Ubiquitinated, leading to proteasomal degradation. Post-translationally, O-glycosylated, glycosylation at Ser-181 and Ser-182 prevents phosphorylation on Thr-189, Ser-185 and Thr-180 and DNA binding activity which delays the adipocyte differentiation program. In terms of processing, acetylated. Acetylation at Lys-39 is an important and dynamic regulatory event that contributes to its ability to transactivate target genes, including those associated with adipogenesis and adipocyte function. Deacetylation by HDAC1 represses its transactivation activity. Acetylated by KAT2A and KAT2B within a cluster of lysine residues between amino acids 99-103, this acetylation is strongly induced by glucocorticoid treatment and enhances transactivation activity. As to expression, liver and lung.

Its subcellular location is the nucleus. It localises to the cytoplasm. Its function is as follows. Important transcription factor regulating the expression of genes involved in immune and inflammatory responses. Also plays a significant role in adipogenesis, as well as in the gluconeogenic pathway, liver regeneration, and hematopoiesis. The consensus recognition site is 5'-T[TG]NNGNAA[TG]-3'. Its functional capacity is governed by protein interactions and post-translational protein modifications. During early embryogenesis, plays essential and redundant roles with CEBPA. Has a promitotic effect on many cell types such as hepatocytes and adipocytes but has an antiproliferative effect on T-cells by repressing MYC expression, facilitating differentiation along the T-helper 2 lineage. Binds to regulatory regions of several acute-phase and cytokines genes and plays a role in the regulation of acute-phase reaction and inflammation. Also plays a role in intracellular bacteria killing. During adipogenesis, is rapidly expressed and, after activation by phosphorylation, induces CEBPA and PPARG, which turn on the series of adipocyte genes that give rise to the adipocyte phenotype. The delayed transactivation of the CEBPA and PPARG genes by CEBPB appears necessary to allow mitotic clonal expansion and thereby progression of terminal differentiation. Essential for female reproduction because of a critical role in ovarian follicle development. Restricts osteoclastogenesis: together with NFE2L1; represses expression of DSPP during odontoblast differentiation. Essential for gene expression induction in activated macrophages. Plays a major role in immune responses such as CD4(+) T-cell response, granuloma formation and endotoxin shock. Not essential for intracellular bacteria killing. In terms of biological role, acts as a dominant negative through heterodimerization with isoform 2. Promotes osteoblast differentiation and osteoclastogenesis. The protein is CCAAT/enhancer-binding protein beta of Rattus norvegicus (Rat).